We begin with the raw amino-acid sequence, 238 residues long: Ribonuclease PH (238 aa).

Residues Arg86 and 124 to 126 (GTR) each bind phosphate.

The protein belongs to the RNase PH family. In terms of assembly, homohexameric ring arranged as a trimer of dimers.

The enzyme catalyses tRNA(n+1) + phosphate = tRNA(n) + a ribonucleoside 5'-diphosphate. Its function is as follows. Phosphorolytic 3'-5' exoribonuclease that plays an important role in tRNA 3'-end maturation. Removes nucleotide residues following the 3'-CCA terminus of tRNAs; can also add nucleotides to the ends of RNA molecules by using nucleoside diphosphates as substrates, but this may not be physiologically important. Probably plays a role in initiation of 16S rRNA degradation (leading to ribosome degradation) during starvation. In Geotalea uraniireducens (strain Rf4) (Geobacter uraniireducens), this protein is Ribonuclease PH.